The following is a 474-amino-acid chain: UDP-N-acetylmuramate--L-alanine ligase (474 aa).

Gly-115–Thr-121 is a binding site for ATP.

This sequence belongs to the MurCDEF family.

Its subcellular location is the cytoplasm. The enzyme catalyses UDP-N-acetyl-alpha-D-muramate + L-alanine + ATP = UDP-N-acetyl-alpha-D-muramoyl-L-alanine + ADP + phosphate + H(+). It functions in the pathway cell wall biogenesis; peptidoglycan biosynthesis. In terms of biological role, cell wall formation. The protein is UDP-N-acetylmuramate--L-alanine ligase of Novosphingobium aromaticivorans (strain ATCC 700278 / DSM 12444 / CCUG 56034 / CIP 105152 / NBRC 16084 / F199).